Reading from the N-terminus, the 121-residue chain is Small ribosomal subunit protein bS16 (121 aa).

Residues 97 to 114 show a composition bias toward basic and acidic residues; it reads LAKAKTKDEENDNSKVES. A disordered region spans residues 97 to 121; it reads LAKAKTKDEENDNSKVESEGNEAES.

It belongs to the bacterial ribosomal protein bS16 family.

In Prochlorococcus marinus (strain AS9601), this protein is Small ribosomal subunit protein bS16.